The sequence spans 64 residues: Micrurotoxin 1 (64 aa).

Disulfide bonds link Cys3/Cys24, Cys6/Cys11, Cys17/Cys41, Cys45/Cys57, and Cys58/Cys63.

Belongs to the three-finger toxin family. Ancestral subfamily. Expressed by the venom gland.

It localises to the secreted. Functionally, allosteric modulator of the GABA(A) receptor (GABR), possibly increasing receptor affinity for the agonist, thus enhancing receptor opening and macroscopic desensitization. In vivo, intracerebroventricular injection into mice results in periods of reduced basal activity, followed by bursts of intense seizures and death. The polypeptide is Micrurotoxin 1 (Micrurus mipartitus (Red-tailed coral snake)).